The primary structure comprises 442 residues: UDP-N-acetylmuramate--L-alanine ligase (442 aa).

109–115 (GAHGKTS) serves as a coordination point for ATP.

Belongs to the MurCDEF family.

The protein resides in the cytoplasm. The catalysed reaction is UDP-N-acetyl-alpha-D-muramate + L-alanine + ATP = UDP-N-acetyl-alpha-D-muramoyl-L-alanine + ADP + phosphate + H(+). It participates in cell wall biogenesis; peptidoglycan biosynthesis. Cell wall formation. The sequence is that of UDP-N-acetylmuramate--L-alanine ligase from Streptococcus pyogenes serotype M49 (strain NZ131).